We begin with the raw amino-acid sequence, 695 residues long: Elongation factor G 1 (695 aa).

The tr-type G domain occupies Ser6–Thr282. GTP contacts are provided by residues Ala15–Thr22, Asp82–His86, and Asn136–Asp139.

Belongs to the TRAFAC class translation factor GTPase superfamily. Classic translation factor GTPase family. EF-G/EF-2 subfamily.

The protein localises to the cytoplasm. In terms of biological role, catalyzes the GTP-dependent ribosomal translocation step during translation elongation. During this step, the ribosome changes from the pre-translocational (PRE) to the post-translocational (POST) state as the newly formed A-site-bound peptidyl-tRNA and P-site-bound deacylated tRNA move to the P and E sites, respectively. Catalyzes the coordinated movement of the two tRNA molecules, the mRNA and conformational changes in the ribosome. The protein is Elongation factor G 1 (fusA) of Treponema pallidum (strain Nichols).